A 226-amino-acid chain; its full sequence is MLLHIPAIFTAEEVSRIRAALEQAEWADGKATAGYQSAKAKHNLQLPQDHPLAREIGEAMLQRLWNHPLFMSAALPLKVFPPLFNCYTGGGSFDFHIDNAVRDVHGGRERVRTDLSSTLFFSDPEDYDGGELVIQDTYGLQQVKLPAGDLVLYPGTSLHKVNPVTRGARYASFFWTQSLVREDSQRTLLFEMDQSIQRLTRDVPDHPSLIRLTGTYHNLLRRWSEL.

Residues 78-178 enclose the Fe2OG dioxygenase domain; sequence KVFPPLFNCY…RYASFFWTQS (101 aa). Residues histidine 96, aspartate 98, and histidine 159 each coordinate Fe cation. Arginine 169 serves as a coordination point for 2-oxoglutarate.

Requires Fe(2+) as cofactor. L-ascorbate serves as cofactor.

The chain is PKHD-type hydroxylase PiuC (piuC) from Pseudomonas aeruginosa (strain ATCC 15692 / DSM 22644 / CIP 104116 / JCM 14847 / LMG 12228 / 1C / PRS 101 / PAO1).